A 78-amino-acid chain; its full sequence is Structural DNA-binding protein p10 (78 aa).

The span at 1–24 shows a compositional bias: low complexity; the sequence is MPTKAGTKSTANKKTTKGSSKSGS. The interval 1–41 is disordered; it reads MPTKAGTKSTANKKTTKGSSKSGSPRGHTGKTHAPPSMHSG.

This sequence belongs to the asfivirus P10 family.

Its subcellular location is the virion. In terms of biological role, may play a role in genome packaging through direct interaction with viral DNA. Binds to ssDNA and dsDNA with the same apparent affinity in vitro. This African swine fever virus (isolate Tick/South Africa/Pretoriuskop Pr4/1996) (ASFV) protein is Structural DNA-binding protein p10.